The sequence spans 226 residues: Cytidylate kinase (226 aa).

Position 11–19 (11–19 (GPASAGKST)) interacts with ATP.

The protein belongs to the cytidylate kinase family. Type 1 subfamily.

It localises to the cytoplasm. The catalysed reaction is CMP + ATP = CDP + ADP. The enzyme catalyses dCMP + ATP = dCDP + ADP. The chain is Cytidylate kinase from Limosilactobacillus fermentum (strain NBRC 3956 / LMG 18251) (Lactobacillus fermentum).